The chain runs to 75 residues: RNA-binding protein KhpA (75 aa).

The region spanning 29-75 (SIILELKVAPEDMGKVIGKQGRIAKAIRTVIKAAAVKENKRVVVEII) is the KH domain.

Belongs to the KhpA RNA-binding protein family. As to quaternary structure, forms a complex with KhpB.

The protein localises to the cytoplasm. Its function is as follows. A probable RNA chaperone. Forms a complex with KhpB which binds to cellular RNA and controls its expression. Plays a role in peptidoglycan (PG) homeostasis and cell length regulation. The protein is RNA-binding protein KhpA of Clostridium acetobutylicum (strain ATCC 824 / DSM 792 / JCM 1419 / IAM 19013 / LMG 5710 / NBRC 13948 / NRRL B-527 / VKM B-1787 / 2291 / W).